The following is a 596-amino-acid chain: ATP-binding protein Uup (596 aa).

2 ABC transporter domains span residues 1–222 (MSLI…RIEK) and 290–516 (FKLD…SKIN). ATP is bound by residues 36–43 (GKNGAGKS) and 322–329 (GDNGCGKS). The C-terminal domain (CTD), binds DNA stretch occupies residues 519 to 596 (IKIKNNFKKE…LEKNIINTKI (78 aa)).

It belongs to the ABC transporter superfamily. ABCF family. Uup subfamily.

The protein localises to the cytoplasm. It catalyses the reaction ATP + H2O = ADP + phosphate + H(+). Its function is as follows. Probably plays a role in ribosome assembly or function. May be involved in resolution of branched DNA intermediates that result from template switching in postreplication gaps. Binds DNA and has ATPase activity. This is ATP-binding protein Uup from Buchnera aphidicola subsp. Acyrthosiphon pisum (strain APS) (Acyrthosiphon pisum symbiotic bacterium).